Here is a 371-residue protein sequence, read N- to C-terminus: Methionine import ATP-binding protein MetN (371 aa).

The 242-residue stretch at isoleucine 29–valine 270 folds into the ABC transporter domain. Glycine 67–serine 74 serves as a coordination point for ATP.

It belongs to the ABC transporter superfamily. Methionine importer (TC 3.A.1.24) family. In terms of assembly, the complex is composed of two ATP-binding proteins (MetN), two transmembrane proteins (MetI) and a solute-binding protein (MetQ).

Its subcellular location is the cell inner membrane. It carries out the reaction L-methionine(out) + ATP + H2O = L-methionine(in) + ADP + phosphate + H(+). The catalysed reaction is D-methionine(out) + ATP + H2O = D-methionine(in) + ADP + phosphate + H(+). In terms of biological role, part of the ABC transporter complex MetNIQ involved in methionine import. Responsible for energy coupling to the transport system. The sequence is that of Methionine import ATP-binding protein MetN from Rhodopseudomonas palustris (strain BisA53).